The chain runs to 1410 residues: Condensin-1 complex subunit CAP-D2 (1410 aa).

Residues 469-480 (LEPTEHASKEST) are compositionally biased toward basic and acidic residues. Disordered stretches follow at residues 469 to 492 (LEPT…DGEI), 504 to 525 (HQDS…EKDV), 860 to 879 (KTKK…NLEA), and 1208 to 1410 (KEQE…GSRS). The segment covering 869–879 (ESQNTEENLEA) has biased composition (polar residues). Over residues 1208 to 1226 (KEQEETARNAEVHREKTKT) the composition is skewed to basic and acidic residues. 2 stretches are compositionally biased toward acidic residues: residues 1240–1284 (PVEE…EEPD) and 1306–1319 (IETE…DSEP). Over residues 1323-1339 (QCGTTNPRSLNRKTSGD) the composition is skewed to polar residues. Residues 1342–1365 (IETESEEEQSDSEEEPSDSEEEPD) are compositionally biased toward acidic residues. The span at 1368 to 1379 (QCGTTNPRSLNQ) shows a compositional bias: polar residues.

Belongs to the CND1 (condensin subunit 1) family. In terms of assembly, component of the condensin complex. In terms of tissue distribution, present in buds.

The protein localises to the chromosome. The protein resides in the nucleus. Its function is as follows. Essential protein. Regulatory subunit of the condensin complex, a complex required for conversion of interphase chromatin into mitotic-like condense chromosomes. The condensin complex probably introduces positive supercoils into relaxed DNA in the presence of type I topoisomerases and converts nicked DNA into positive knotted forms in the presence of type II topoisomerases. Required for fertility, growth and euchromatin organization, but not for sister chromatid cohesion. Necessary to maintain normal structural integrity of the meiotic chromosomes during the two nuclear divisions of gametogenesis, especially to maintain compaction of the centromeric repeats and 45S rDNA. Also seems to be involved in crossover formation during meiotic prophase I. Prevents centromeric and pericentromeric heterochromatin repeats association. Contributes to the induction of stress-responsive genes in response to stress treatment. The chain is Condensin-1 complex subunit CAP-D2 from Arabidopsis thaliana (Mouse-ear cress).